A 63-amino-acid polypeptide reads, in one-letter code: MKATELKDKSVEELNTELLNLLREQFNLRMQASTGQLEKTDQIRKVRRSIARVKTILTQKAAA.

This sequence belongs to the universal ribosomal protein uL29 family.

The sequence is that of Large ribosomal subunit protein uL29 from Pseudoalteromonas atlantica (strain T6c / ATCC BAA-1087).